A 339-amino-acid polypeptide reads, in one-letter code: Arylacetonitrilase (339 aa).

In terms of domain architecture, CN hydrolase spans 5–290 (IRVAVTQAEP…EGIVYADLDL (286 aa)). The Proton acceptor role is filled by Glu45. Lys126 is an active-site residue. Residue Cys167 is the Nucleophile of the active site.

The protein belongs to the carbon-nitrogen hydrolase superfamily. Nitrilase family.

The catalysed reaction is a nitrile + 2 H2O = a carboxylate + NH4(+). It carries out the reaction 4-chlorophenylacetonitrile + 2 H2O = 4-chlorophenylacetate + NH4(+). In terms of biological role, nitrilase that hydrolyzes preferentially phenylacetonitrile, (R,S)-mandelonitrile, and 3-indolylacetonitrile. The sequence is that of Arylacetonitrilase from Fusarium vanettenii (strain ATCC MYA-4622 / CBS 123669 / FGSC 9596 / NRRL 45880 / 77-13-4) (Fusarium solani subsp. pisi).